Consider the following 153-residue polypeptide: Endoribonuclease YbeY (153 aa).

Positions 114, 118, and 124 each coordinate Zn(2+).

Belongs to the endoribonuclease YbeY family. Zn(2+) serves as cofactor.

It localises to the cytoplasm. Functionally, single strand-specific metallo-endoribonuclease involved in late-stage 70S ribosome quality control and in maturation of the 3' terminus of the 16S rRNA. The protein is Endoribonuclease YbeY of Shewanella baltica (strain OS185).